The following is a 315-amino-acid chain: Rhomboid-related protein 4 (315 aa).

Residues 1-21 are Cytoplasmic-facing; it reads MQRRTRGINTGLLLLLSQVFQ. The helical transmembrane segment at 22–42 threads the bilayer; the sequence is IGINNIPPVTLATLAVNVWFF. Over 43–103 the chain is Lumenal; it reads LNPWKPLYHS…KLERRLGSRW (61 aa). A helical transmembrane segment spans residues 104 to 124; it reads FAYVIATFSLLTGVVYLLLQF. Over 125–137 the chain is Cytoplasmic; sequence TVAELLNQPDFKR. The helical transmembrane segment at 138-154 threads the bilayer; sequence NCAVGFSGVLFALKVLS. Ser-144 serves as the catalytic Nucleophile. Over 155–180 the chain is Lumenal; it reads NHYCPGGFVNILGFPVPNRFACWAEL. A helical transmembrane segment spans residues 181–201; that stretch reads VAIHFCTPGTSFAGHLAGILV. Residue His-195 is part of the active site. Residues 202–315 are Cytoplasmic-facing; sequence GLMYTQGPLK…RQRLHRFDGQ (114 aa). The ubiquitin-binding domain (UBD) stretch occupies residues 269-284; the sequence is SEEEQLERALRASIWD. The VCP/p97-interacting motif (VIM) stretch occupies residues 301-315; it reads PEEMRRQRLHRFDGQ.

Belongs to the peptidase S54 family. As to quaternary structure, interacts with BIK and STEAP3. Interacts (via C-terminal domain) with VCP/P97. Interacts with ubiquitin and ubiquitinated proteins. As to expression, expressed in testis (at protein level). Expressed in intestine, lung, brain, kidney, epididymis, stomach, muscle, spleen, liver, heart and testis.

Its subcellular location is the endoplasmic reticulum membrane. The protein resides in the mitochondrion membrane. The catalysed reaction is Cleaves type-1 transmembrane domains using a catalytic dyad composed of serine and histidine that are contributed by different transmembrane domains.. Its activity is regulated as follows. Inhibited by aprotinin. Its function is as follows. Intramembrane-cleaving serine protease that cleaves single transmembrane or multi-pass membrane proteins in the hydrophobic plane of the membrane, luminal loops and juxtamembrane regions. Involved in regulated intramembrane proteolysis and the subsequent release of functional polypeptides from their membrane anchors. Functional component of endoplasmic reticulum-associated degradation (ERAD) for misfolded membrane proteins. Required for the degradation process of some specific misfolded endoplasmic reticulum (ER) luminal proteins. Participates in the transfer of misfolded proteins from the ER to the cytosol, where they are destroyed by the proteasome in a ubiquitin-dependent manner. Functions in BIK, MPZ, PKD1, PTCRA, RHO, STEAP3 and TRAC processing. Involved in the regulation of exosomal secretion; inhibits the TSAP6-mediated secretion pathway. Involved in the regulation of apoptosis; modulates BIK-mediated apoptotic activity. Also plays a role in the regulation of spermatogenesis; inhibits apoptotic activity in spermatogonia. The protein is Rhomboid-related protein 4 (Rhbdd1) of Mus musculus (Mouse).